The primary structure comprises 492 residues: Glutamyl-tRNA(Gln) amidotransferase subunit A (492 aa).

Active-site charge relay system residues include Lys78 and Ser158. Ser182 (acyl-ester intermediate) is an active-site residue.

It belongs to the amidase family. GatA subfamily. Heterotrimer of A, B and C subunits.

It carries out the reaction L-glutamyl-tRNA(Gln) + L-glutamine + ATP + H2O = L-glutaminyl-tRNA(Gln) + L-glutamate + ADP + phosphate + H(+). In terms of biological role, allows the formation of correctly charged Gln-tRNA(Gln) through the transamidation of misacylated Glu-tRNA(Gln) in organisms which lack glutaminyl-tRNA synthetase. The reaction takes place in the presence of glutamine and ATP through an activated gamma-phospho-Glu-tRNA(Gln). This chain is Glutamyl-tRNA(Gln) amidotransferase subunit A, found in Rhodopseudomonas palustris (strain HaA2).